A 510-amino-acid polypeptide reads, in one-letter code: Major facilitator superfamily domain-containing protein 4A (510 aa).

12 helical membrane passes run 19–39 (LTYWSVFFSFGLCIAFLGPTL), 53–73 (ISWVFFSQQLCLLLGSALGGV), 82–102 (LWALFTSTLVISLVFAVIPFC), 107–127 (VLASVIALAGLAMGCIDTVAN), 139–159 (AFFLQVLHFFVGLGALLSPLI), 218–238 (YAFWIMALINLPVPLAVLFLL), 303–323 (FFAIHITAALVLFMTDGMMGA), 345–365 (GYLPSLFWGFITLGRFISIPV), 380–400 (VGVVVTFLMLLIFSYNVIFLF), 401–421 (VGTASLGLFLSSTFPSMLAYT), 434–454 (VLVTGAGIGEMVLQMLVGLIF), and 462–482 (FLVCGVIFGCLAFIFYILLLF).

The protein belongs to the major facilitator superfamily.

The protein resides in the membrane. The protein is Major facilitator superfamily domain-containing protein 4A of Mus musculus (Mouse).